The primary structure comprises 153 residues: MNVIEGNLIGTGLRVAIVIARWNDFIGGNLLEGAVNTLKRHGVNDDDISVAWCPGSYEIPLVVKKIAERGQHDAIITLGAVIRGATSHYEVVVNAVSSGVTKVMHDTGIPVLLGVLTTDTIEQAIERAGTKAGNKGSECAVAAIEMANLLKQL.

Residues Trp22, 56–58 (SYE), and 80–82 (AVI) contribute to the 5-amino-6-(D-ribitylamino)uracil site. 85 to 86 (AT) is a (2S)-2-hydroxy-3-oxobutyl phosphate binding site. His88 (proton donor) is an active-site residue. Leu113 contributes to the 5-amino-6-(D-ribitylamino)uracil binding site. Residue Arg127 coordinates (2S)-2-hydroxy-3-oxobutyl phosphate.

The protein belongs to the DMRL synthase family.

The enzyme catalyses (2S)-2-hydroxy-3-oxobutyl phosphate + 5-amino-6-(D-ribitylamino)uracil = 6,7-dimethyl-8-(1-D-ribityl)lumazine + phosphate + 2 H2O + H(+). It participates in cofactor biosynthesis; riboflavin biosynthesis; riboflavin from 2-hydroxy-3-oxobutyl phosphate and 5-amino-6-(D-ribitylamino)uracil: step 1/2. Catalyzes the formation of 6,7-dimethyl-8-ribityllumazine by condensation of 5-amino-6-(D-ribitylamino)uracil with 3,4-dihydroxy-2-butanone 4-phosphate. This is the penultimate step in the biosynthesis of riboflavin. The chain is 6,7-dimethyl-8-ribityllumazine synthase from Herpetosiphon aurantiacus (strain ATCC 23779 / DSM 785 / 114-95).